The chain runs to 252 residues: 2-succinyl-6-hydroxy-2,4-cyclohexadiene-1-carboxylate synthase (252 aa).

It belongs to the AB hydrolase superfamily. MenH family. Monomer.

It carries out the reaction 5-enolpyruvoyl-6-hydroxy-2-succinyl-cyclohex-3-ene-1-carboxylate = (1R,6R)-6-hydroxy-2-succinyl-cyclohexa-2,4-diene-1-carboxylate + pyruvate. It participates in quinol/quinone metabolism; 1,4-dihydroxy-2-naphthoate biosynthesis; 1,4-dihydroxy-2-naphthoate from chorismate: step 3/7. It functions in the pathway quinol/quinone metabolism; menaquinone biosynthesis. In terms of biological role, catalyzes a proton abstraction reaction that results in 2,5-elimination of pyruvate from 2-succinyl-5-enolpyruvyl-6-hydroxy-3-cyclohexene-1-carboxylate (SEPHCHC) and the formation of 2-succinyl-6-hydroxy-2,4-cyclohexadiene-1-carboxylate (SHCHC). This Salmonella arizonae (strain ATCC BAA-731 / CDC346-86 / RSK2980) protein is 2-succinyl-6-hydroxy-2,4-cyclohexadiene-1-carboxylate synthase.